A 580-amino-acid chain; its full sequence is Rap guanine nucleotide exchange factor 5 (580 aa).

The 134-residue stretch at 67 to 200 (DRYVVVSGTP…ELKEFQKILG (134 aa)) folds into the N-terminal Ras-GEF domain. In terms of domain architecture, Ras-GEF spans 344–579 (NTWDLALELM…FELSHRLEPR (236 aa)).

As to expression, in the embryo, expressed in young neurons of the developing telencephalon, diencephalon and hindbrain. Not expressed in progenitor cells in the ventricular zone.

It is found in the nucleus. Guanine nucleotide exchange factor (GEF) for RAP1A, RAP2A and MRAS/M-Ras-GTP. Its association with MRAS inhibits Rap1 activation. The protein is Rap guanine nucleotide exchange factor 5 (Rapgef5) of Rattus norvegicus (Rat).